Consider the following 293-residue polypeptide: Protease HtpX (293 aa).

2 helical membrane-spanning segments follow: residues 4–24 (IALF…VLSL) and 34–54 (GLMI…LLMS). Residue histidine 139 coordinates Zn(2+). Glutamate 140 is a catalytic residue. Residue histidine 143 coordinates Zn(2+). Transmembrane regions (helical) follow at residues 158-178 (IVNT…SGFL) and 193-213 (LVYF…ASII). Position 222 (glutamate 222) interacts with Zn(2+).

The protein belongs to the peptidase M48B family. It depends on Zn(2+) as a cofactor.

Its subcellular location is the cell inner membrane. The sequence is that of Protease HtpX from Pectobacterium carotovorum subsp. carotovorum (strain PC1).